Consider the following 110-residue polypeptide: UPF0060 membrane protein Bcep18194_A4425 (110 aa).

4 helical membrane-spanning segments follow: residues 9–29 (ALFA…WLVL), 34–54 (PVWL…LLTL), 66–86 (YGGV…GVAL), and 88–108 (RWDV…ALQP).

Belongs to the UPF0060 family.

The protein localises to the cell inner membrane. This Burkholderia lata (strain ATCC 17760 / DSM 23089 / LMG 22485 / NCIMB 9086 / R18194 / 383) protein is UPF0060 membrane protein Bcep18194_A4425.